The following is a 338-amino-acid chain: Nicotinate-nucleotide--dimethylbenzimidazole phosphoribosyltransferase (338 aa).

Catalysis depends on E305, which acts as the Proton acceptor.

The protein belongs to the CobT family. In terms of assembly, homodimer.

The catalysed reaction is 5,6-dimethylbenzimidazole + nicotinate beta-D-ribonucleotide = alpha-ribazole 5'-phosphate + nicotinate + H(+). It participates in nucleoside biosynthesis; alpha-ribazole biosynthesis; alpha-ribazole from 5,6-dimethylbenzimidazole: step 1/2. Functionally, catalyzes the synthesis of alpha-ribazole-5'-phosphate from nicotinate mononucleotide (NAMN) and 5,6-dimethylbenzimidazole (DMB). The sequence is that of Nicotinate-nucleotide--dimethylbenzimidazole phosphoribosyltransferase (cobU) from Sinorhizobium sp.